Here is a 129-residue protein sequence, read N- to C-terminus: Sulfurtransferase TusD (129 aa).

The active-site Cysteine persulfide intermediate is the Cys79.

Belongs to the DsrE/TusD family. As to quaternary structure, heterohexamer, formed by a dimer of trimers. The hexameric TusBCD complex contains 2 copies each of TusB, TusC and TusD. The TusBCD complex interacts with TusE.

It localises to the cytoplasm. Functionally, part of a sulfur-relay system required for 2-thiolation of 5-methylaminomethyl-2-thiouridine (mnm(5)s(2)U) at tRNA wobble positions. Accepts sulfur from TusA and transfers it in turn to TusE. This is Sulfurtransferase TusD from Serratia proteamaculans (strain 568).